Reading from the N-terminus, the 190-residue chain is Large ribosomal subunit protein uL10 (190 aa).

The interval 170-190 is disordered; the sequence is AAGAPAEAAPVEAPAAETVDA.

It belongs to the universal ribosomal protein uL10 family. Part of the ribosomal stalk of the 50S ribosomal subunit. The N-terminus interacts with L11 and the large rRNA to form the base of the stalk. The C-terminus forms an elongated spine to which L12 dimers bind in a sequential fashion forming a multimeric L10(L12)X complex.

In terms of biological role, forms part of the ribosomal stalk, playing a central role in the interaction of the ribosome with GTP-bound translation factors. The chain is Large ribosomal subunit protein uL10 from Kineococcus radiotolerans (strain ATCC BAA-149 / DSM 14245 / SRS30216).